Here is a 262-residue protein sequence, read N- to C-terminus: UPF0739 protein C1orf74 homolog (262 aa).

It belongs to the UPF0739 family.

The protein is UPF0739 protein C1orf74 homolog of Xenopus laevis (African clawed frog).